Here is a 259-residue protein sequence, read N- to C-terminus: uncharacterized protein (259 aa).

This sequence to M.thermoautotrophicum MTH738.

This is an uncharacterized protein from Methanocaldococcus jannaschii (strain ATCC 43067 / DSM 2661 / JAL-1 / JCM 10045 / NBRC 100440) (Methanococcus jannaschii).